The following is a 335-amino-acid chain: Arylacetonitrilase (335 aa).

One can recognise a CN hydrolase domain in the interval 6–291; the sequence is LKVAITQAQP…EGIVYADLDM (286 aa). The active-site Proton acceptor is Glu46. Lys127 is a catalytic residue. Residue Cys168 is the Nucleophile of the active site.

Belongs to the carbon-nitrogen hydrolase superfamily. Nitrilase family.

The catalysed reaction is a nitrile + 2 H2O = a carboxylate + NH4(+). It carries out the reaction 4-chlorophenylacetonitrile + 2 H2O = 4-chlorophenylacetate + NH4(+). In terms of biological role, nitrilase that hydrolyzes preferentially phenylacetonitrile, (R,S)-mandelonitrile, and 3-indolylacetonitrile. The protein is Arylacetonitrilase of Arthroderma benhamiae (strain ATCC MYA-4681 / CBS 112371) (Trichophyton mentagrophytes).